The chain runs to 193 residues: GTP cyclohydrolase 1 (193 aa).

Zn(2+) contacts are provided by Cys-83, His-86, and Cys-154.

The protein belongs to the GTP cyclohydrolase I family. In terms of assembly, homomer.

The enzyme catalyses GTP + H2O = 7,8-dihydroneopterin 3'-triphosphate + formate + H(+). Its pathway is cofactor biosynthesis; 7,8-dihydroneopterin triphosphate biosynthesis; 7,8-dihydroneopterin triphosphate from GTP: step 1/1. The chain is GTP cyclohydrolase 1 from Porphyromonas gingivalis (strain ATCC 33277 / DSM 20709 / CIP 103683 / JCM 12257 / NCTC 11834 / 2561).